The primary structure comprises 203 residues: ATP-dependent Clp protease proteolytic subunit (203 aa).

Ser98 acts as the Nucleophile in catalysis. Residue His123 is part of the active site.

Belongs to the peptidase S14 family. As to quaternary structure, fourteen ClpP subunits assemble into 2 heptameric rings which stack back to back to give a disk-like structure with a central cavity, resembling the structure of eukaryotic proteasomes.

The protein localises to the cytoplasm. It catalyses the reaction Hydrolysis of proteins to small peptides in the presence of ATP and magnesium. alpha-casein is the usual test substrate. In the absence of ATP, only oligopeptides shorter than five residues are hydrolyzed (such as succinyl-Leu-Tyr-|-NHMec, and Leu-Tyr-Leu-|-Tyr-Trp, in which cleavage of the -Tyr-|-Leu- and -Tyr-|-Trp bonds also occurs).. Its function is as follows. Cleaves peptides in various proteins in a process that requires ATP hydrolysis. Has a chymotrypsin-like activity. Plays a major role in the degradation of misfolded proteins. This Desulfotalea psychrophila (strain LSv54 / DSM 12343) protein is ATP-dependent Clp protease proteolytic subunit.